A 75-amino-acid chain; its full sequence is Small ribosomal subunit protein bS18 (75 aa).

Belongs to the bacterial ribosomal protein bS18 family. Part of the 30S ribosomal subunit. Forms a tight heterodimer with protein bS6.

Binds as a heterodimer with protein bS6 to the central domain of the 16S rRNA, where it helps stabilize the platform of the 30S subunit. The polypeptide is Small ribosomal subunit protein bS18 (Thermosipho melanesiensis (strain DSM 12029 / CIP 104789 / BI429)).